We begin with the raw amino-acid sequence, 799 residues long: 1,4-alpha-glucan-branching enzyme 2, chloroplastic/amyloplastic (799 aa).

A chloroplast-targeting transit peptide spans 1–57; the sequence is MAFRVSGAVLGGAVRAPRLTGGGEGSLVFRHTGLFLTRGARVGCSGTHGAMRAAAAA. The (1,4-alpha-D-glucosyl)n site is built by tryptophan 196 and lysine 232. Aspartate 447 (nucleophile) is an active-site residue. The active-site Proton donor is glutamate 502.

Belongs to the glycosyl hydrolase 13 family. GlgB subfamily. Monomer.

The protein resides in the plastid. It is found in the chloroplast. It localises to the amyloplast. The catalysed reaction is Transfers a segment of a (1-&gt;4)-alpha-D-glucan chain to a primary hydroxy group in a similar glucan chain.. It functions in the pathway glycan biosynthesis; starch biosynthesis. Catalyzes the formation of the alpha-1,6-glucosidic linkages in starch by scission of a 1,4-alpha-linked oligosaccharide from growing alpha-1,4-glucan chains and the subsequent attachment of the oligosaccharide to the alpha-1,6 position. This is 1,4-alpha-glucan-branching enzyme 2, chloroplastic/amyloplastic (SBE1) from Zea mays (Maize).